The primary structure comprises 352 residues: uncharacterized protein (352 aa).

This is an uncharacterized protein from Acanthamoeba polyphaga mimivirus (APMV).